Reading from the N-terminus, the 312-residue chain is DnaJ homolog subfamily B member 7 (312 aa).

One can recognise a J domain in the interval 3–69 (DYYEVLGVQR…EKRDIYDKYG (67 aa)). A disordered region spans residues 272–312 (SWVTNKKEPSIFSAGFKEGGRRKKKKHKEGQKKKKSNKRNH). The span at 291–312 (GRRKKKKHKEGQKKKKSNKRNH) shows a compositional bias: basic residues.

In terms of biological role, probably acts as a co-chaperone. This is DnaJ homolog subfamily B member 7 (Dnajb7) from Mus musculus (Mouse).